Consider the following 427-residue polypeptide: Trigger factor (427 aa).

The PPIase FKBP-type domain occupies 163–248 (GDTVVIDFVG…IHEVKAKEVP (86 aa)).

It belongs to the FKBP-type PPIase family. Tig subfamily.

The protein resides in the cytoplasm. It catalyses the reaction [protein]-peptidylproline (omega=180) = [protein]-peptidylproline (omega=0). Functionally, involved in protein export. Acts as a chaperone by maintaining the newly synthesized protein in an open conformation. Functions as a peptidyl-prolyl cis-trans isomerase. The protein is Trigger factor of Streptococcus pneumoniae (strain Hungary19A-6).